A 207-amino-acid polypeptide reads, in one-letter code: 3-isopropylmalate dehydratase small subunit (207 aa).

It belongs to the LeuD family. LeuD type 1 subfamily. In terms of assembly, heterodimer of LeuC and LeuD.

The catalysed reaction is (2R,3S)-3-isopropylmalate = (2S)-2-isopropylmalate. It participates in amino-acid biosynthesis; L-leucine biosynthesis; L-leucine from 3-methyl-2-oxobutanoate: step 2/4. Catalyzes the isomerization between 2-isopropylmalate and 3-isopropylmalate, via the formation of 2-isopropylmaleate. This chain is 3-isopropylmalate dehydratase small subunit (leuD), found in Buchnera aphidicola subsp. Acyrthosiphon pisum (strain APS) (Acyrthosiphon pisum symbiotic bacterium).